We begin with the raw amino-acid sequence, 210 residues long: MKSKIDYTLYLVTDHQLMSTKTLEEAVEQAIAGGCTLVQLREKTASSRDFYQNAINVKTITDKYNVPLIINDRIDIALAVGADGVHVGQSDLPAAVVRKIIGNDKILGVSAGSVEKAIEAQKIGADYIGVGALFSTSTKTDAKAVSIETLMKIVREVSIPVVGIGGINAENAVQLKNTGIRGIAVVSAIISQKDIKSSAEKLLEIFVNKA.

4-amino-2-methyl-5-(diphosphooxymethyl)pyrimidine is bound by residues 39 to 43 (QLREK) and Asn-71. Residues Asp-72 and Asp-91 each coordinate Mg(2+). Ser-110 is a 4-amino-2-methyl-5-(diphosphooxymethyl)pyrimidine binding site. Residue 136–138 (TST) coordinates 2-[(2R,5Z)-2-carboxy-4-methylthiazol-5(2H)-ylidene]ethyl phosphate. Lys-139 serves as a coordination point for 4-amino-2-methyl-5-(diphosphooxymethyl)pyrimidine. Residues Gly-166 and 186–187 (VS) contribute to the 2-[(2R,5Z)-2-carboxy-4-methylthiazol-5(2H)-ylidene]ethyl phosphate site.

It belongs to the thiamine-phosphate synthase family. Mg(2+) is required as a cofactor.

It catalyses the reaction 2-[(2R,5Z)-2-carboxy-4-methylthiazol-5(2H)-ylidene]ethyl phosphate + 4-amino-2-methyl-5-(diphosphooxymethyl)pyrimidine + 2 H(+) = thiamine phosphate + CO2 + diphosphate. The catalysed reaction is 2-(2-carboxy-4-methylthiazol-5-yl)ethyl phosphate + 4-amino-2-methyl-5-(diphosphooxymethyl)pyrimidine + 2 H(+) = thiamine phosphate + CO2 + diphosphate. It carries out the reaction 4-methyl-5-(2-phosphooxyethyl)-thiazole + 4-amino-2-methyl-5-(diphosphooxymethyl)pyrimidine + H(+) = thiamine phosphate + diphosphate. Its pathway is cofactor biosynthesis; thiamine diphosphate biosynthesis; thiamine phosphate from 4-amino-2-methyl-5-diphosphomethylpyrimidine and 4-methyl-5-(2-phosphoethyl)-thiazole: step 1/1. Functionally, condenses 4-methyl-5-(beta-hydroxyethyl)thiazole monophosphate (THZ-P) and 2-methyl-4-amino-5-hydroxymethyl pyrimidine pyrophosphate (HMP-PP) to form thiamine monophosphate (TMP). The chain is Thiamine-phosphate synthase from Ruminiclostridium cellulolyticum (strain ATCC 35319 / DSM 5812 / JCM 6584 / H10) (Clostridium cellulolyticum).